Here is a 792-residue protein sequence, read N- to C-terminus: G-type lectin S-receptor-like serine/threonine-protein kinase At1g61440 (792 aa).

A signal peptide spans 1–17 (MGKKRIVLLLFISFSYA). Residues 18 to 137 (EITKESPLSI…VTGRTLWESF (120 aa)) form the Bulb-type lectin domain. The Extracellular portion of the chain corresponds to 18–419 (EITKESPLSI…ELDVHKRKMT (402 aa)). N-linked (GlcNAc...) asparagine glycans are attached at residues N46, N127, and N229. The region spanning 271–307 (PANSCDIYGVCGPFGFCVISDPPKCKCFKGFVPKSIE) is the EGF-like; atypical domain. 2 disulfide bridges follow: C275–C287 and C281–C295. N313, N329, and N368 each carry an N-linked (GlcNAc...) asparagine glycan. The PAN domain occupies 326 to 408 (CQGNSTGKDA…GEILSIRLAH (83 aa)). 2 cysteine pairs are disulfide-bonded: C361-C382 and C365-C371. A helical transmembrane segment spans residues 420-440 (IVASTVSLTLFVILGFATFGF). Residues 441–792 (WRNRVKHHDA…EMTESVILGR (352 aa)) are Cytoplasmic-facing. Positions 478–763 (FSLSNKLGHG…DLPLPKQPTF (286 aa)) constitute a Protein kinase domain. Residues 484–492 (LGHGGFGSV) and K506 contribute to the ATP site. 2 positions are modified to phosphoserine: S512 and S527. Residues 567 to 584 (RKRLELDWPKRFDIIQGI) are caM-binding. The active-site Proton acceptor is the D603. Phosphoserine occurs at positions 607 and 620. Phosphothreonine is present on T637. Residues S680 and S774 each carry the phosphoserine modification.

The protein belongs to the protein kinase superfamily. Ser/Thr protein kinase family.

The protein resides in the cell membrane. It carries out the reaction L-seryl-[protein] + ATP = O-phospho-L-seryl-[protein] + ADP + H(+). The catalysed reaction is L-threonyl-[protein] + ATP = O-phospho-L-threonyl-[protein] + ADP + H(+). This chain is G-type lectin S-receptor-like serine/threonine-protein kinase At1g61440, found in Arabidopsis thaliana (Mouse-ear cress).